Here is a 266-residue protein sequence, read N- to C-terminus: Biotin--[acetyl-CoA-carboxylase] ligase (266 aa).

The 189-residue stretch at 14-202 (RSLRDQLIGA…ELEARIIQWR (189 aa)) folds into the BPL/LPL catalytic domain. Biotin is bound by residues 38-39 (ST), glutamine 63, arginine 67, and lysine 138.

This sequence belongs to the biotin--protein ligase family. In terms of assembly, monomer in solution. Forms dimers under specific crystallization conditions.

The catalysed reaction is biotin + L-lysyl-[protein] + ATP = N(6)-biotinyl-L-lysyl-[protein] + AMP + diphosphate + H(+). It carries out the reaction biotin + ATP + H(+) = biotinyl-5'-AMP + diphosphate. It catalyses the reaction biotinyl-5'-AMP + L-lysyl-[protein] = N(6)-biotinyl-L-lysyl-[protein] + AMP + 2 H(+). With respect to regulation, binding of biotin and ATP significantly increases the thermal stability of BirA and leads to the formation of a high affinity holoenzyme complex. Its function is as follows. Catalyzes the transfer of biotin onto a conserved lysine residue of the biotin carboxyl carrier protein (BCCP) domain of acetyl-CoA carboxylase and converts it to active holo-BCCP. Forms an acyl-adenylate intermediate. Cannot use GTP or desthiobiotin. The chain is Biotin--[acetyl-CoA-carboxylase] ligase from Mycobacterium tuberculosis (strain ATCC 25618 / H37Rv).